The chain runs to 265 residues: Auxin-responsive protein IAA22 (265 aa).

2 disordered regions span residues 54–88 (LSTP…ERRP) and 172–199 (DGRE…SPAM). Over residues 65–88 (LMNKMKPCSDEGHGSRDAAQERRP) the composition is skewed to basic and acidic residues. The PB1 domain maps to 91–194 (TMFVKVNLEG…GVDQVSERPD (104 aa)).

Belongs to the Aux/IAA family. As to quaternary structure, homodimers and heterodimers. In terms of tissue distribution, highly expressed in flowers. Expressed in roots and seedlings.

Its subcellular location is the nucleus. In terms of biological role, aux/IAA proteins are short-lived transcriptional factors that function as repressors of early auxin response genes at low auxin concentrations. This is Auxin-responsive protein IAA22 (IAA22) from Oryza sativa subsp. japonica (Rice).